A 46-amino-acid chain; its full sequence is Myoregulin (46 aa).

Topologically, residues 1–21 are cytoplasmic; that stretch reads MTGKNWILISTTTPKSLEDEI. The helical transmembrane segment at 22–42 threads the bilayer; it reads VGRLLKILFVIFVDLISIIYV. The Lumenal portion of the chain corresponds to 43–46; it reads VITS.

As to quaternary structure, homooligomer. Monomer. Interacts with ATP2A1/SERCA1. Interacts as a monomer with ATP2A2/SERCA2; the interaction inhibits ATP2A2 activity.

Its subcellular location is the sarcoplasmic reticulum membrane. Its function is as follows. Inhibits the activity of ATP2A1/SERCA1 ATPase in sarcoplasmic reticulum by decreasing the apparent affinity of the ATPase for Ca(2+), thereby acting as a key regulator of skeletal muscle activity. Its high expression in adult skeletal muscle, suggests that it constitutes the predominant regulator of ATP2A1/SERCA1 in adult skeletal muscle. Also inhibits the activity of ATP2A2/SERCA2 and ATP2A3/SERCA3. This Homo sapiens (Human) protein is Myoregulin.